A 196-amino-acid polypeptide reads, in one-letter code: DnaA initiator-associating protein DiaA (196 aa).

The region spanning Leu34 to Glu196 is the SIS domain.

The protein belongs to the SIS family. DiaA subfamily. As to quaternary structure, homotetramer; dimer of dimers.

In terms of biological role, required for the timely initiation of chromosomal replication via direct interactions with the DnaA initiator protein. In Serratia proteamaculans (strain 568), this protein is DnaA initiator-associating protein DiaA.